Reading from the N-terminus, the 212-residue chain is ATP-dependent dethiobiotin synthetase BioD (212 aa).

13 to 18 (GIGKTV) provides a ligand contact to ATP. Residue Thr17 participates in Mg(2+) binding. Lys33 is a catalytic residue. Ser37 provides a ligand contact to substrate. Residue Glu100 coordinates Mg(2+). Residues 100–103 (EGAG) and 184–186 (PRL) each bind ATP.

It belongs to the dethiobiotin synthetase family. Homodimer. The cofactor is Mg(2+).

The protein localises to the cytoplasm. It carries out the reaction (7R,8S)-7,8-diammoniononanoate + CO2 + ATP = (4R,5S)-dethiobiotin + ADP + phosphate + 3 H(+). The protein operates within cofactor biosynthesis; biotin biosynthesis; biotin from 7,8-diaminononanoate: step 1/2. Its function is as follows. Catalyzes a mechanistically unusual reaction, the ATP-dependent insertion of CO2 between the N7 and N8 nitrogen atoms of 7,8-diaminopelargonic acid (DAPA, also called 7,8-diammoniononanoate) to form a ureido ring. This Agrobacterium fabrum (strain C58 / ATCC 33970) (Agrobacterium tumefaciens (strain C58)) protein is ATP-dependent dethiobiotin synthetase BioD.